The chain runs to 620 residues: Chaperone protein DnaK (620 aa).

At Thr197 the chain carries Phosphothreonine; by autocatalysis. A disordered region spans residues Ala591–Glu620.

The protein belongs to the heat shock protein 70 family.

Its function is as follows. Acts as a chaperone. In Helicobacter pylori (strain HPAG1), this protein is Chaperone protein DnaK.